The sequence spans 352 residues: Ferrochelatase (352 aa).

Positions 222 and 303 each coordinate Fe cation.

The protein belongs to the ferrochelatase family.

The protein resides in the cytoplasm. It carries out the reaction heme b + 2 H(+) = protoporphyrin IX + Fe(2+). The protein operates within porphyrin-containing compound metabolism; protoheme biosynthesis; protoheme from protoporphyrin-IX: step 1/1. In terms of biological role, catalyzes the ferrous insertion into protoporphyrin IX. In Brucella melitensis biotype 2 (strain ATCC 23457), this protein is Ferrochelatase.